Reading from the N-terminus, the 771-residue chain is Tetratricopeptide repeat-containing protein trd-1 (771 aa).

TPR repeat units follow at residues 389–415 (LEMW…IRRL), 416–449 (IEQK…SDDR), 451–484 (ARAH…QPIQ), 485–518 (LGTW…QPDH), 520–552 (EAWN…NYEH), and 553–586 (PNVW…NKRG).

The protein belongs to the TTC27 family. As to expression, expressed in the spermatheca.

Its subcellular location is the cytoplasm. Developmental protein required for cell fate determination in both the germline and seam cells of the developing epidermis. Specifically, involved in sex determination and may function in parallel or downstream of other sex determination factors, including tra-2 and fem-3, to promote oogenesis in its role in the regulation of the switch from spermatogenesis to oogenesis in the gonads. Also implicated in the mitosis to meiosis switch in distal tip cells. This chain is Tetratricopeptide repeat-containing protein trd-1, found in Caenorhabditis elegans.